A 786-amino-acid chain; its full sequence is E3 ubiquitin-protein ligase pub3 (786 aa).

A C2 domain is found at 1 to 109 (MEQGAKRVRF…RSNREVSLTR (109 aa)). 2 disordered regions span residues 134 to 225 (IRAP…NSNA) and 263 to 306 (TWTR…DSGN). The segment covering 142–193 (SSTTANRTTSTPTTTTARTTRTTPRPTATTNTSNQSTSNSTRNGTSAATSNG) has biased composition (low complexity). Polar residues predominate over residues 204–213 (HRSSPVTNRQ). A compositionally biased stretch (low complexity) spans 214–225 (TNNTSALSNSNA). Residues 236-269 (GRLPPGWERRADSLGRTYYVDHNTRTTTWTRPAS) form the WW 1 domain. Composition is skewed to polar residues over residues 263 to 285 (TWTR…QRLN) and 295 to 305 (SNPSLMQSDSG). WW domains are found at residues 306 to 339 (NDLP…DPRN) and 364 to 397 (GPLP…DPRL). An HECT domain is found at 453-786 (SAHDLKKRLM…VENTVGFGNE (334 aa)). Cysteine 754 acts as the Glycyl thioester intermediate in catalysis.

It catalyses the reaction S-ubiquitinyl-[E2 ubiquitin-conjugating enzyme]-L-cysteine + [acceptor protein]-L-lysine = [E2 ubiquitin-conjugating enzyme]-L-cysteine + N(6)-ubiquitinyl-[acceptor protein]-L-lysine.. The protein operates within protein modification; protein ubiquitination. Its function is as follows. E3 ubiquitin-protein ligase which accepts ubiquitin from an E2 ubiquitin-conjugating enzyme in the form of a thioester and then directly transfers the ubiquitin to targeted substrates. This is E3 ubiquitin-protein ligase pub3 (pub3) from Schizosaccharomyces pombe (strain 972 / ATCC 24843) (Fission yeast).